The primary structure comprises 508 residues: Phenylalanine--tRNA ligase alpha subunit (508 aa).

Ala2 is modified (N-acetylalanine). Phosphoserine is present on residues Ser193 and Ser301. Lys311 is subject to N6-acetyllysine. L-phenylalanine contacts are provided by residues Thr329, 372–374 (QIE), and Tyr412. Glu414 contacts Mg(2+). Residue Phe438 participates in L-phenylalanine binding.

The protein belongs to the class-II aminoacyl-tRNA synthetase family. Phe-tRNA synthetase alpha subunit type 2 subfamily. In terms of assembly, heterotetramer; dimer of two heterodimers formed by FARSA and FARSB. Mg(2+) serves as cofactor.

Its subcellular location is the cytoplasm. The catalysed reaction is tRNA(Phe) + L-phenylalanine + ATP = L-phenylalanyl-tRNA(Phe) + AMP + diphosphate + H(+). This Mus musculus (Mouse) protein is Phenylalanine--tRNA ligase alpha subunit (Farsa).